Here is a 603-residue protein sequence, read N- to C-terminus: ABC transporter E family member 1 (603 aa).

4Fe-4S ferredoxin-type domains follow at residues 7–39 (RIAI…KLCI) and 46–75 (KSAF…IINL). ABC transporter domains follow at residues 70 to 315 (IQII…FLAG) and 344 to 566 (VKSY…LSHL). ATP contacts are provided by residues 110–117 (GTNGIGKS) and 381–388 (GENGTGKT).

It belongs to the ABC transporter superfamily. ABCE family. Expressed in roots, stems, leaves, flowers and siliques.

The protein resides in the membrane. In Arabidopsis thaliana (Mouse-ear cress), this protein is ABC transporter E family member 1 (ABCE1).